Consider the following 126-residue polypeptide: Large ribosomal subunit protein uL14 (126 aa).

It belongs to the universal ribosomal protein uL14 family. Part of the 50S ribosomal subunit. Forms a cluster with proteins L3 and L19. In the 70S ribosome, L14 and L19 interact and together make contacts with the 16S rRNA in bridges B5 and B8.

Binds to 23S rRNA. Forms part of two intersubunit bridges in the 70S ribosome. This chain is Large ribosomal subunit protein uL14, found in Persephonella marina (strain DSM 14350 / EX-H1).